Consider the following 218-residue polypeptide: N-(5'-phosphoribosyl)anthranilate isomerase (218 aa).

The protein belongs to the TrpF family.

The enzyme catalyses N-(5-phospho-beta-D-ribosyl)anthranilate = 1-(2-carboxyphenylamino)-1-deoxy-D-ribulose 5-phosphate. It functions in the pathway amino-acid biosynthesis; L-tryptophan biosynthesis; L-tryptophan from chorismate: step 3/5. This Desulfatibacillum aliphaticivorans protein is N-(5'-phosphoribosyl)anthranilate isomerase.